The chain runs to 169 residues: E1B protein, small T-antigen (169 aa).

It belongs to the adenoviridae E1B 19 kDa protein family.

This chain is E1B protein, small T-antigen, found in Canis lupus familiaris (Dog).